We begin with the raw amino-acid sequence, 164 residues long: Choriogonadotropin subunit beta (164 aa).

Residues 1–20 form the signal peptide; sequence MEMLQGLLLCLLLSTGGAWA. 6 cysteine pairs are disulfide-bonded: C29–C77, C43–C92, C46–C130, C54–C108, C58–C110, and C113–C120. The N-linked (GlcNAc...) asparagine glycan is linked to N50. Positions 133-164 are disordered; the sequence is HTSQDSSSKDPPRNLTSPSQLPEPADAPLVPQ. The O-linked (GalNAc...) serine glycan is linked to S140. N146 is a glycosylation site (N-linked (GlcNAc...) asparagine). A glycan (O-linked (GalNAc...) serine) is linked at S151.

The protein belongs to the glycoprotein hormones subunit beta family. As to quaternary structure, heterodimer of a common alpha chain and a unique beta chain which confers biological specificity to thyrotropin, lutropin, follitropin and gonadotropin.

The protein localises to the secreted. Its function is as follows. Stimulates the ovaries to synthesize the steroids that are essential for the maintenance of pregnancy. This is Choriogonadotropin subunit beta (CGB) from Aotus nancymaae (Ma's night monkey).